A 200-amino-acid chain; its full sequence is High mobility group protein B3 (200 aa).

Residue Lys3 is modified to N6-acetyllysine. 2 consecutive DNA-binding regions (HMG box) follow at residues 9 to 79 (PKGK…KDYG) and 93 to 161 (PKRP…ADYK). Residue Cys23 is modified to Cysteine sulfonic acid (-SO3H); alternate. The cysteines at positions 23 and 45 are disulfide-linked. Lys30 and Lys43 each carry N6-acetyllysine. Cys45 carries the post-translational modification Cysteine sulfonic acid (-SO3H); alternate. The disordered stretch occupies residues 71–97 (YDREMKDYGPAKGGKKKKDPNAPKRPP). A Phosphoserine modification is found at Ser98. Cysteine sulfonic acid (-SO3H) is present on Cys104. N6-acetyllysine is present on residues Lys112 and Lys139. A disordered region spans residues 161–200 (KSKGKFDGAKGPAKVARKKVEEEEEEEEEEEEEEEEEEDE). Residues 182–200 (EEEEEEEEEEEEEEEEEDE) are compositionally biased toward acidic residues.

It belongs to the HMGB family. Reduction/oxidation of cysteine residues Cys-23, Cys-45 and Cys-104 and a possible intramolecular disulfide bond involving Cys-23 and Cys-45 give rise to different redox forms with specific functional activities in various cellular compartments: 1- fully reduced HMGB3 (HMGB3C23hC45hC104h), 2- disulfide HMGB3 (HMGB3C23-C45C104h) and 3- sulfonyl HMGB3 (HMGB3C23soC45soC104so). As to expression, expressed in bone marrow cells, specifically in primitive Lin-, c-kit+, Sca-1+, IL-7Ralpha- cells, and Ter119+ erythroid cells.

It localises to the nucleus. The protein resides in the chromosome. The protein localises to the cytoplasm. Its function is as follows. Multifunctional protein with various roles in different cellular compartments. May act in a redox sensitive manner. Associates with chromatin and binds DNA with a preference for non-canonical DNA structures such as single-stranded DNA. Can bend DNA and enhance DNA flexibility by looping thus providing a mechanism to promote activities on various gene promoters. Proposed to be involved in the innate immune response to nucleic acids by acting as a cytoplasmic promiscuous immunogenic DNA/RNA sensor. Negatively regulates B-cell and myeloid cell differentiation. In hematopoietic stem cells may regulate the balance between self-renewal and differentiation. Involved in negative regulation of canonical Wnt signaling. The polypeptide is High mobility group protein B3 (Hmgb3) (Mus musculus (Mouse)).